A 339-amino-acid chain; its full sequence is Anthranilate phosphoribosyltransferase (339 aa).

5-phospho-alpha-D-ribose 1-diphosphate-binding positions include glycine 79, 82–83, threonine 87, 89–92, 107–115, and serine 119; these read GD, NVST, and KHGNRSVSS. Residue glycine 79 participates in anthranilate binding. A Mg(2+)-binding site is contributed by serine 91. Asparagine 110 serves as a coordination point for anthranilate. Arginine 165 is a binding site for anthranilate. Positions 224 and 225 each coordinate Mg(2+).

The protein belongs to the anthranilate phosphoribosyltransferase family. In terms of assembly, homodimer. It depends on Mg(2+) as a cofactor.

It carries out the reaction N-(5-phospho-beta-D-ribosyl)anthranilate + diphosphate = 5-phospho-alpha-D-ribose 1-diphosphate + anthranilate. It functions in the pathway amino-acid biosynthesis; L-tryptophan biosynthesis; L-tryptophan from chorismate: step 2/5. Catalyzes the transfer of the phosphoribosyl group of 5-phosphorylribose-1-pyrophosphate (PRPP) to anthranilate to yield N-(5'-phosphoribosyl)-anthranilate (PRA). The polypeptide is Anthranilate phosphoribosyltransferase (Caldivirga maquilingensis (strain ATCC 700844 / DSM 13496 / JCM 10307 / IC-167)).